The sequence spans 271 residues: ATP synthase subunit a (271 aa).

A run of 5 helical transmembrane segments spans residues 40–60, 100–120, 146–166, 220–240, and 242–262; these read TINIDSMFFSVGLGLLFLVLF, LIAPLALTIFVWVFLMNLMDL, DVNVTLSMALGVFILILFYSI, LIFILIAGLLPWWSQWILNVP, and AIFHILIITLQAFIFMVLTIV.

It belongs to the ATPase A chain family. F-type ATPases have 2 components, CF(1) - the catalytic core - and CF(0) - the membrane proton channel. CF(1) has five subunits: alpha(3), beta(3), gamma(1), delta(1), epsilon(1). CF(0) has three main subunits: a(1), b(2) and c(9-12). The alpha and beta chains form an alternating ring which encloses part of the gamma chain. CF(1) is attached to CF(0) by a central stalk formed by the gamma and epsilon chains, while a peripheral stalk is formed by the delta and b chains.

It localises to the cell inner membrane. In terms of biological role, key component of the proton channel; it plays a direct role in the translocation of protons across the membrane. This is ATP synthase subunit a from Shigella dysenteriae serotype 1 (strain Sd197).